The following is a 930-amino-acid chain: Alanine--tRNA ligase (930 aa).

4 residues coordinate Zn(2+): H595, H599, C700, and H704.

The protein belongs to the class-II aminoacyl-tRNA synthetase family. It depends on Zn(2+) as a cofactor.

Its subcellular location is the cytoplasm. The catalysed reaction is tRNA(Ala) + L-alanine + ATP = L-alanyl-tRNA(Ala) + AMP + diphosphate. Its function is as follows. Catalyzes the attachment of alanine to tRNA(Ala) in a two-step reaction: alanine is first activated by ATP to form Ala-AMP and then transferred to the acceptor end of tRNA(Ala). Also edits incorrectly charged Ser-tRNA(Ala) and Gly-tRNA(Ala) via its editing domain. This is Alanine--tRNA ligase from Malacoplasma penetrans (strain HF-2) (Mycoplasma penetrans).